Here is a 366-residue protein sequence, read N- to C-terminus: Protein RecA (366 aa).

77-84 provides a ligand contact to ATP; sequence GPESSGKT. Residues 346–366 form a disordered region; that stretch reads IGGPGGEDDDAGGAAGVGDEA.

It belongs to the RecA family.

The protein resides in the cytoplasm. In terms of biological role, can catalyze the hydrolysis of ATP in the presence of single-stranded DNA, the ATP-dependent uptake of single-stranded DNA by duplex DNA, and the ATP-dependent hybridization of homologous single-stranded DNAs. It interacts with LexA causing its activation and leading to its autocatalytic cleavage. The sequence is that of Protein RecA from Rhodospirillum rubrum (strain ATCC 11170 / ATH 1.1.1 / DSM 467 / LMG 4362 / NCIMB 8255 / S1).